A 423-amino-acid chain; its full sequence is 26S proteasome regulatory subunit 6A homolog (423 aa).

211 to 218 (GPPGTGKT) contacts ATP.

The protein belongs to the AAA ATPase family.

It is found in the cytoplasm. The protein resides in the nucleus. The 26S proteasome is involved in the ATP-dependent degradation of ubiquitinated proteins. The regulatory (or ATPase) complex confers ATP dependency and substrate specificity to the 26S complex. This chain is 26S proteasome regulatory subunit 6A homolog (TBP1), found in Solanum lycopersicum (Tomato).